The sequence spans 296 residues: uncharacterized protein (296 aa).

A signal peptide spans methionine 1 to alanine 20.

This is an uncharacterized protein from Rickettsia felis (strain ATCC VR-1525 / URRWXCal2) (Rickettsia azadi).